We begin with the raw amino-acid sequence, 464 residues long: L-cysteine:1D-myo-inositol 2-amino-2-deoxy-alpha-D-glucopyranoside ligase (464 aa).

Position 67 (cysteine 67) interacts with Zn(2+). L-cysteinyl-5'-AMP is bound by residues 67-70 (CGIT), threonine 82, and 105-107 (NVT). The short motif at 69–79 (ITPYDATHLGH) is the 'HIGH' region element. A 'ERGGDP' region motif is present at residues 207 to 212 (ERGGDP). Position 247 (tryptophan 247) interacts with L-cysteinyl-5'-AMP. Cysteine 251 contacts Zn(2+). An L-cysteinyl-5'-AMP-binding site is contributed by 269–271 (GTD). Position 276 (histidine 276) interacts with Zn(2+). Valine 303 contacts L-cysteinyl-5'-AMP. Residues 309-313 (KMSKS) carry the 'KMSKS' region motif. Residues 410 to 435 (AGGSAGAGPDPTHQGGPVRGSGGDVP) are disordered.

The protein belongs to the class-I aminoacyl-tRNA synthetase family. MshC subfamily. Monomer. Zn(2+) is required as a cofactor.

The catalysed reaction is 1D-myo-inositol 2-amino-2-deoxy-alpha-D-glucopyranoside + L-cysteine + ATP = 1D-myo-inositol 2-(L-cysteinylamino)-2-deoxy-alpha-D-glucopyranoside + AMP + diphosphate + H(+). Its function is as follows. Catalyzes the ATP-dependent condensation of GlcN-Ins and L-cysteine to form L-Cys-GlcN-Ins. In Frankia casuarinae (strain DSM 45818 / CECT 9043 / HFP020203 / CcI3), this protein is L-cysteine:1D-myo-inositol 2-amino-2-deoxy-alpha-D-glucopyranoside ligase.